The following is a 427-amino-acid chain: Serine--tRNA ligase (427 aa).

229–231 (TAE) lines the L-serine pocket. 260-262 (RSE) provides a ligand contact to ATP. Residue Glu283 coordinates L-serine. Residue 347 to 350 (EISS) coordinates ATP. Residue Ser383 coordinates L-serine.

Belongs to the class-II aminoacyl-tRNA synthetase family. Type-1 seryl-tRNA synthetase subfamily. As to quaternary structure, homodimer. The tRNA molecule binds across the dimer.

It localises to the cytoplasm. It catalyses the reaction tRNA(Ser) + L-serine + ATP = L-seryl-tRNA(Ser) + AMP + diphosphate + H(+). It carries out the reaction tRNA(Sec) + L-serine + ATP = L-seryl-tRNA(Sec) + AMP + diphosphate + H(+). It functions in the pathway aminoacyl-tRNA biosynthesis; selenocysteinyl-tRNA(Sec) biosynthesis; L-seryl-tRNA(Sec) from L-serine and tRNA(Sec): step 1/1. Its function is as follows. Catalyzes the attachment of serine to tRNA(Ser). Is also able to aminoacylate tRNA(Sec) with serine, to form the misacylated tRNA L-seryl-tRNA(Sec), which will be further converted into selenocysteinyl-tRNA(Sec). This Oleidesulfovibrio alaskensis (strain ATCC BAA-1058 / DSM 17464 / G20) (Desulfovibrio alaskensis) protein is Serine--tRNA ligase.